A 391-amino-acid chain; its full sequence is Ferrochelatase (391 aa).

2 residues coordinate Fe cation: histidine 196 and glutamate 281.

It belongs to the ferrochelatase family.

It is found in the cytoplasm. It carries out the reaction heme b + 2 H(+) = protoporphyrin IX + Fe(2+). It functions in the pathway porphyrin-containing compound metabolism; protoheme biosynthesis; protoheme from protoporphyrin-IX: step 1/1. Catalyzes the ferrous insertion into protoporphyrin IX. This Prochlorococcus marinus (strain NATL1A) protein is Ferrochelatase.